A 641-amino-acid chain; its full sequence is Bifunctional protein glk (641 aa).

The interval 1–340 (MSTGAQTKAA…QLSNRTGGAS (340 aa)) is glucokinase. 23–28 (ADVGGT) lines the ATP pocket. The region spanning 341–417 (SAVFERIRQM…LKLATGLTGT (77 aa)) is the HTH rpiR-type domain. The tract at residues 341–641 (SAVFERIRQM…SHGAAPAAKD (301 aa)) is putative HTH-type transcriptional regulator. The H-T-H motif DNA-binding region spans 377–396 (IVNIARKADVSQPTVIRFCR). One can recognise an SIS domain in the interval 461-600 (AIDILNNARR…AVGVAIRRAA (140 aa)). Residues 576–596 (SMISRILHLVMIDILAVGVAI) form a helical membrane-spanning segment.

It in the N-terminal section; belongs to the bacterial glucokinase family.

It is found in the membrane. The catalysed reaction is D-glucose + ATP = D-glucose 6-phosphate + ADP + H(+). This chain is Bifunctional protein glk (glk), found in Burkholderia mallei (strain ATCC 23344).